Here is a 40-residue protein sequence, read N- to C-terminus: MLIFALGSVVVGIYLMAVVGMDIHQNGLKSVVETIWNGVK.

This is an uncharacterized protein from Escherichia coli (Bacteriophage T4).